The chain runs to 185 residues: MIEETLLEAGEKMDKAVEVAKDDFASIRTGRANPALYNKVIVEYYGTPTPLQQLASFGVPDARTILITPYDKTALRDIEKALSDSEVGANPSNDGNVIRVTIPELTKERRKEYVKIVKGKGEDAKVSIRSIRRKAKDSLDKLVKDGEAGEDEGARAEKELDALTKQHVDSIDELLKRKEAELLEV.

Positions 142 to 161 (LVKDGEAGEDEGARAEKELD) are disordered.

This sequence belongs to the RRF family.

The protein localises to the cytoplasm. Functionally, responsible for the release of ribosomes from messenger RNA at the termination of protein biosynthesis. May increase the efficiency of translation by recycling ribosomes from one round of translation to another. The protein is Ribosome-recycling factor of Paenarthrobacter aurescens (strain TC1).